The following is a 519-amino-acid chain: Dolichol kinase (519 aa).

At 1-47 (MVAIIPHASFTTIKLTQKTEGSQMPTEEICKINMRTRKFDVGGNSRD) the chain is on the cytoplasmic side. A helical transmembrane segment spans residues 48–68 (FECFYSNFVQTVILLGTFFYC). At 69–88 (VERLQPWSIVTADISYKQIF) the chain is on the lumenal side. The helical transmembrane segment at 89 to 109 (VNVFVVCLIMVGLIFTKYWQH) threads the bilayer. Topologically, residues 110–118 (GYKSLPKFD) are cytoplasmic. The helical transmembrane segment at 119-139 (TIYSLYLPFMVSLLFDTSSTV) threads the bilayer. Residues 140 to 151 (INTILILSVLNS) are Lumenal-facing. Residues 152–172 (YRWRTQLVVIILQLCLIFFNF) form a helical membrane-spanning segment. Residues 173-181 (EAGDRLKNI) lie on the Cytoplasmic side of the membrane. A helical membrane pass occupies residues 182–203 (ISIVINSLLSLILKYIGQLKSL). At 204–223 (DNIDSNLFSILLTNILYVSE) the chain is on the lumenal side. A helical membrane pass occupies residues 224-244 (AGTVHFRILKGIILALTTIIS). At 245–253 (INYVLKKVM) the chain is on the cytoplasmic side. Residues 254–274 (HFKPFMLSISFAIGLPLFANT) traverse the membrane as a helical segment. The Lumenal segment spans residues 275 to 294 (FIHLEDGENPLLWLVKYILE). Residues 295-315 (STIRQKILFAWSSILILSIPS) traverse the membrane as a helical segment. The Cytoplasmic segment spans residues 316–326 (ILIEKDSLSLN). The helical transmembrane segment at 327–347 (TSRKLWHFIIFLLIIPSFQMD) threads the bilayer. Topologically, residues 348–349 (SN) are lumenal. A helical transmembrane segment spans residues 350–370 (FVKIALSGTIPVFLSIEYIRF). Residues 371 to 394 (QNLPPLGSAIELQLRRFADDRDHS) lie on the Cytoplasmic side of the membrane. The helical transmembrane segment at 395–415 (GPLIISYLYLLFGISTPLLMN) threads the bilayer. The Lumenal portion of the chain corresponds to 416 to 417 (NS). The helical transmembrane segment at 418–438 (PMGLIGLGIGDSLASIIGKRY) threads the bilayer. Over 439 to 449 (GRIRWKGTQKT) the chain is Cytoplasmic. A helical membrane pass occupies residues 450–470 (LEGTLAFIVTSFIVCLVLLRF). Residues 471–472 (DK) are Lumenal-facing. A helical transmembrane segment spans residues 473–493 (AAIFNHLTTLQLLTLCTLSGV). The Cytoplasmic portion of the chain corresponds to 494 to 519 (LEGNSVLNDNILIPAFMMICEKLITL).

It belongs to the polyprenol kinase family.

The protein localises to the endoplasmic reticulum membrane. It catalyses the reaction a di-trans,poly-cis-dolichol + CTP = a di-trans,poly-cis-dolichyl phosphate + CDP + H(+). Its pathway is protein modification; protein glycosylation. In terms of biological role, catalyzes CTP-mediated phosphorylation of dolichol, the terminal step in de novo dolichyl monophosphate (Dol-P) biosynthesis. Dol-P is a lipid carrier essential for the synthesis of N-linked and O-linked oligosaccharides and for GPI anchors. This chain is Dolichol kinase (SEC59), found in Saccharomyces cerevisiae (strain ATCC 204508 / S288c) (Baker's yeast).